Consider the following 280-residue polypeptide: 3-methyl-2-oxobutanoate hydroxymethyltransferase (280 aa).

Positions 49 and 88 each coordinate Mg(2+). 3-methyl-2-oxobutanoate-binding positions include aspartate 49–serine 50, aspartate 88, and lysine 118. Glutamate 120 serves as a coordination point for Mg(2+). The active-site Proton acceptor is glutamate 186.

The protein belongs to the PanB family. As to quaternary structure, homodecamer; pentamer of dimers. Requires Mg(2+) as cofactor.

Its subcellular location is the cytoplasm. The catalysed reaction is 3-methyl-2-oxobutanoate + (6R)-5,10-methylene-5,6,7,8-tetrahydrofolate + H2O = 2-dehydropantoate + (6S)-5,6,7,8-tetrahydrofolate. It participates in cofactor biosynthesis; (R)-pantothenate biosynthesis; (R)-pantoate from 3-methyl-2-oxobutanoate: step 1/2. Functionally, catalyzes the reversible reaction in which hydroxymethyl group from 5,10-methylenetetrahydrofolate is transferred onto alpha-ketoisovalerate to form ketopantoate. The sequence is that of 3-methyl-2-oxobutanoate hydroxymethyltransferase from Ruegeria sp. (strain TM1040) (Silicibacter sp.).